The following is a 375-amino-acid chain: Putative F-box protein At5g52620 (375 aa).

The region spanning 5 to 52 is the F-box domain; sequence GKSDPIPIDIILDILSRLSTNSIAKFGLASKFCGSILRGQDFIELFLI.

The chain is Putative F-box protein At5g52620 from Arabidopsis thaliana (Mouse-ear cress).